Consider the following 311-residue polypeptide: Probable porphobilinogen deaminase (311 aa).

Residue cysteine 237 is modified to S-(dipyrrolylmethanemethyl)cysteine. The disordered stretch occupies residues 270 to 289 (SKTGDKNNPKSLGQSAGEEL).

Belongs to the HMBS family. Dipyrromethane serves as cofactor.

It carries out the reaction 4 porphobilinogen + H2O = hydroxymethylbilane + 4 NH4(+). The protein operates within porphyrin-containing compound metabolism; protoporphyrin-IX biosynthesis; coproporphyrinogen-III from 5-aminolevulinate: step 2/4. Functionally, tetrapolymerization of the monopyrrole PBG into the hydroxymethylbilane pre-uroporphyrinogen in several discrete steps. The chain is Probable porphobilinogen deaminase from Nitrosopumilus maritimus (strain SCM1).